A 103-amino-acid chain; its full sequence is Viscotoxin-B (103 aa).

The signal sequence occupies residues Phe1–Ser6. 3 cysteine pairs are disulfide-bonded: Cys9/Cys46, Cys10/Cys38, and Cys22/Cys32. Residues Phe53 to Asp103 constitute a propeptide, acidic domain.

This sequence belongs to the plant thionin (TC 1.C.44) family.

It is found in the secreted. Thionins are small plant proteins which are toxic to animal cells. They seem to exert their toxic effect at the level of the cell membrane. Their precise function is not known. The protein is Viscotoxin-B (THI2.2) of Viscum album (European mistletoe).